A 531-amino-acid chain; its full sequence is UDP-glucuronosyltransferase 1A7 (531 aa).

A signal peptide spans 1 to 25 (MAPADVPASLPLGLCLLLASGFGHA). Asn-71, Asn-293, and Asn-431 each carry an N-linked (GlcNAc...) asparagine glycan. Residues 487–503 (LDVIGFLLAIVLTVVFI) traverse the membrane as a helical segment.

It belongs to the UDP-glycosyltransferase family. In terms of assembly, homodimer. Homooligomer. Interacts with UGT1A1, UGT1A3, UGT1A4, UGT1A6, UGT1A8, UGT1A9 and UGT1A10 to form heterodimers.

The protein localises to the endoplasmic reticulum membrane. The catalysed reaction is glucuronate acceptor + UDP-alpha-D-glucuronate = acceptor beta-D-glucuronoside + UDP + H(+). It catalyses the reaction 17alpha-estradiol + UDP-alpha-D-glucuronate = 17alpha-estradiol 3-O-(beta-D-glucuronate) + UDP + H(+). The enzyme catalyses prunetin + UDP-alpha-D-glucuronate = prunetin-5-O-beta-D-glucuronide + UDP. It carries out the reaction 5-epi-5-F2t-IsoP + UDP-alpha-D-glucuronate = 5-epi-5-F2t-IsoP-glucuronide + UDP + H(+). The catalysed reaction is (E)-ferulate + UDP-alpha-D-glucuronate = (E)-ferulic acid beta-D-glucuronate ester + UDP. It catalyses the reaction candesartan + UDP-alpha-D-glucuronate = candesartan O-beta-D-glucuronoside + UDP. The enzyme catalyses SN-38 + UDP-alpha-D-glucuronate = SN-38 O-beta-D-glucuronide + UDP + H(+). It carries out the reaction mycophenolate + UDP-alpha-D-glucuronate = mycophenolate 7-O-beta-D-glucuronide + UDP + H(+). In terms of biological role, UDP-glucuronosyltransferase (UGT) that catalyzes phase II biotransformation reactions in which lipophilic substrates are conjugated with glucuronic acid to increase the metabolite's water solubility, thereby facilitating excretion into either the urine or bile. Essential for the elimination and detoxification of drugs, xenobiotics and endogenous compounds. Catalyzes the glucuronidation of endogenous estrogen hormone epiestradiol. Involved in the glucuronidation of F2-isoprostane (5-epi-5-F2t-IsoP). Involved in the glucuronidation of the phytochemical ferulic acid at the carboxylic acid group. Also catalyzes the glucuronidation of the isoflavones genistein, daidzein, glycitein, formononetin, biochanin A and prunetin, which are phytoestrogens with anticancer and cardiovascular properties. Involved in the glucuronidation of the AGTR1 angiotensin receptor antagonist caderastan, a drug which can inhibit the effect of angiotensin II. Involved in the biotransformation of 7-ethyl-10-hydroxycamptothecin (SN-38), the pharmacologically active metabolite of the anticancer drug irinotecan. Also metabolizes mycophenolate, an immunosuppressive agent. The chain is UDP-glucuronosyltransferase 1A7 from Rattus norvegicus (Rat).